The chain runs to 252 residues: Body wall muscle protein HR-29 (252 aa).

N-acetylserine is present on S2. Repeat copies occupy residues 37–55 (RDWMTTPYSSTGIGRRDLS), 56–74 (QDWMTTPYTPAGVGRRDLS), and 75–93 (QDWMTTPYTSKGIGSRNLS). The 3 X 19 AA approximate tandem repeats stretch occupies residues 37-93 (RDWMTTPYSSTGIGRRDLSQDWMTTPYTPAGVGRRDLSQDWMTTPYTSKGIGSRNLS). The sHSP domain occupies 138–249 (ISVEHEGKTT…KKTAVPVTVE (112 aa)).

The protein belongs to the small heat shock protein (HSP20) family. In terms of assembly, exists as an oligomer.

Its subcellular location is the membrane. Functionally, may be a component of myofibrils where it acts as a stabilizer. This is Body wall muscle protein HR-29 from Halocynthia roretzi (Sea squirt).